Consider the following 157-residue polypeptide: SsrA-binding protein (157 aa).

The segment covering 136–151 (KRETEKKRDWSREKGR) has biased composition (basic and acidic residues). The tract at residues 136 to 157 (KRETEKKRDWSREKGRLLRARG) is disordered.

The protein belongs to the SmpB family.

It localises to the cytoplasm. Functionally, required for rescue of stalled ribosomes mediated by trans-translation. Binds to transfer-messenger RNA (tmRNA), required for stable association of tmRNA with ribosomes. tmRNA and SmpB together mimic tRNA shape, replacing the anticodon stem-loop with SmpB. tmRNA is encoded by the ssrA gene; the 2 termini fold to resemble tRNA(Ala) and it encodes a 'tag peptide', a short internal open reading frame. During trans-translation Ala-aminoacylated tmRNA acts like a tRNA, entering the A-site of stalled ribosomes, displacing the stalled mRNA. The ribosome then switches to translate the ORF on the tmRNA; the nascent peptide is terminated with the 'tag peptide' encoded by the tmRNA and targeted for degradation. The ribosome is freed to recommence translation, which seems to be the essential function of trans-translation. The protein is SsrA-binding protein of Rhodopseudomonas palustris (strain HaA2).